A 706-amino-acid chain; its full sequence is Protein-glutamine gamma-glutamyltransferase 6 (706 aa).

3 residues coordinate Ca(2+): Ala-223, Asn-226, and Asn-228. The active site involves Cys-274. 5 residues coordinate Ca(2+): Asp-303, Asp-305, Asn-307, Ser-309, and Asp-327. Active-site residues include His-333 and Asp-356. Positions 396, 417, 445, and 450 each coordinate Ca(2+).

It belongs to the transglutaminase superfamily. Transglutaminase family. It depends on Ca(2+) as a cofactor.

It localises to the cytoplasm. It carries out the reaction L-glutaminyl-[protein] + L-lysyl-[protein] = [protein]-L-lysyl-N(6)-5-L-glutamyl-[protein] + NH4(+). In terms of biological role, catalyzes the cross-linking of proteins and the conjugation of polyamines to proteins. In Homo sapiens (Human), this protein is Protein-glutamine gamma-glutamyltransferase 6 (TGM6).